A 238-amino-acid chain; its full sequence is Orotidine 5'-phosphate decarboxylase (238 aa).

Residues Asp10, Lys32, 59–68, Thr122, Arg184, Gln193, Gly213, and Arg214 each bind substrate; that span reads DLKLHDIPNT. Lys61 acts as the Proton donor in catalysis.

The protein belongs to the OMP decarboxylase family. Type 1 subfamily. Homodimer.

The enzyme catalyses orotidine 5'-phosphate + H(+) = UMP + CO2. It participates in pyrimidine metabolism; UMP biosynthesis via de novo pathway; UMP from orotate: step 2/2. Functionally, catalyzes the decarboxylation of orotidine 5'-monophosphate (OMP) to uridine 5'-monophosphate (UMP). The polypeptide is Orotidine 5'-phosphate decarboxylase (Bacillus cereus (strain AH187)).